The chain runs to 261 residues: MDEDRAVEAAASAWPGPSRRRRLIEFLLHASTRLDLRPVVKYTALSFFADRLLPSLRRKMGFCGARGGRAVTSWLLEPLRDSNLELFALVAVWIASKIHELKPLSVKSLKALGDRIIADQHFTCRDFANAELVFMEVVEYNIGSLNIAFTYLEELLVQFREISKIGDLLNMDVCMEILDILYETEDSSWLFNSPCQLAASALVTAYAISVPKQRWEFPILPWVTFTTSYDEEEIMKVVLTILMHVLKPDEMKGKGERDFNI.

The protein belongs to the cyclin family.

This Oryza sativa subsp. japonica (Rice) protein is Cyclin-J18-like.